Consider the following 189-residue polypeptide: Potassium-transporting ATPase KdpC subunit (189 aa).

A helical transmembrane segment spans residues 6-26 (PAILMLIIFTILCGGIYPAVV).

The protein belongs to the KdpC family. In terms of assembly, the system is composed of three essential subunits: KdpA, KdpB and KdpC.

It localises to the cell inner membrane. Part of the high-affinity ATP-driven potassium transport (or Kdp) system, which catalyzes the hydrolysis of ATP coupled with the electrogenic transport of potassium into the cytoplasm. This subunit acts as a catalytic chaperone that increases the ATP-binding affinity of the ATP-hydrolyzing subunit KdpB by the formation of a transient KdpB/KdpC/ATP ternary complex. The sequence is that of Potassium-transporting ATPase KdpC subunit from Geobacter sulfurreducens (strain ATCC 51573 / DSM 12127 / PCA).